Here is a 69-residue protein sequence, read N- to C-terminus: UPF0435 protein SH1076 (69 aa).

Belongs to the UPF0435 family.

The chain is UPF0435 protein SH1076 from Staphylococcus haemolyticus (strain JCSC1435).